The primary structure comprises 284 residues: Bifunctional protein FolD (284 aa).

NADP(+)-binding positions include 163 to 165 (GRS) and Ser-188.

Belongs to the tetrahydrofolate dehydrogenase/cyclohydrolase family. As to quaternary structure, homodimer.

The catalysed reaction is (6R)-5,10-methylene-5,6,7,8-tetrahydrofolate + NADP(+) = (6R)-5,10-methenyltetrahydrofolate + NADPH. It carries out the reaction (6R)-5,10-methenyltetrahydrofolate + H2O = (6R)-10-formyltetrahydrofolate + H(+). It functions in the pathway one-carbon metabolism; tetrahydrofolate interconversion. Functionally, catalyzes the oxidation of 5,10-methylenetetrahydrofolate to 5,10-methenyltetrahydrofolate and then the hydrolysis of 5,10-methenyltetrahydrofolate to 10-formyltetrahydrofolate. The sequence is that of Bifunctional protein FolD from Lactococcus lactis subsp. lactis (strain IL1403) (Streptococcus lactis).